Here is a 703-residue protein sequence, read N- to C-terminus: Elongation factor G 1 (703 aa).

The tr-type G domain maps to 8–290; it reads ERYRNIGISA…AVIDFLPSPV (283 aa). Residues 17 to 24, 88 to 92, and 142 to 145 each bind GTP; these read AHIDAGKT, DTPGH, and NKMD.

This sequence belongs to the TRAFAC class translation factor GTPase superfamily. Classic translation factor GTPase family. EF-G/EF-2 subfamily.

It is found in the cytoplasm. Functionally, catalyzes the GTP-dependent ribosomal translocation step during translation elongation. During this step, the ribosome changes from the pre-translocational (PRE) to the post-translocational (POST) state as the newly formed A-site-bound peptidyl-tRNA and P-site-bound deacylated tRNA move to the P and E sites, respectively. Catalyzes the coordinated movement of the two tRNA molecules, the mRNA and conformational changes in the ribosome. This Ralstonia nicotianae (strain ATCC BAA-1114 / GMI1000) (Ralstonia solanacearum) protein is Elongation factor G 1.